A 291-amino-acid chain; its full sequence is Nucleotide-binding protein PPA0813 (291 aa).

Gly-17–Arg-24 serves as a coordination point for ATP. Asp-66–Ser-69 contributes to the GTP binding site.

The protein belongs to the RapZ-like family.

Its function is as follows. Displays ATPase and GTPase activities. This chain is Nucleotide-binding protein PPA0813, found in Cutibacterium acnes (strain DSM 16379 / KPA171202) (Propionibacterium acnes).